Consider the following 259-residue polypeptide: Putative cysteine-rich repeat secretory protein 25 (259 aa).

The first 31 residues, 1–31 (MSSSFLSRPLVSVYVFAMVTMQLLFMQSVLS), serve as a signal peptide directing secretion. 2 consecutive Gnk2-homologous domains span residues 37–138 (AYLN…SIYT) and 144–256 (YRHI…LYPF).

It belongs to the cysteine-rich repeat secretory protein family.

It is found in the secreted. The chain is Putative cysteine-rich repeat secretory protein 25 (CRRSP25) from Arabidopsis thaliana (Mouse-ear cress).